The chain runs to 367 residues: Glutamate 5-kinase (367 aa).

K10 is a binding site for ATP. Substrate contacts are provided by S50, D137, and N149. ATP is bound by residues 169–170 (TD) and 211–217 (TGGMSTK). Positions 275–353 (AGEITVDEGA…QEIDAILGYE (79 aa)) constitute a PUA domain.

The protein belongs to the glutamate 5-kinase family.

The protein resides in the cytoplasm. It catalyses the reaction L-glutamate + ATP = L-glutamyl 5-phosphate + ADP. It functions in the pathway amino-acid biosynthesis; L-proline biosynthesis; L-glutamate 5-semialdehyde from L-glutamate: step 1/2. In terms of biological role, catalyzes the transfer of a phosphate group to glutamate to form L-glutamate 5-phosphate. This chain is Glutamate 5-kinase, found in Escherichia fergusonii (strain ATCC 35469 / DSM 13698 / CCUG 18766 / IAM 14443 / JCM 21226 / LMG 7866 / NBRC 102419 / NCTC 12128 / CDC 0568-73).